Reading from the N-terminus, the 219-residue chain is Outer membrane virulence protein YopE (219 aa).

Residues 1–37 (MKISSFISTSLPLPTSVSGSSSVGEMSGRSVSQQTSD) form a disordered region. The segment covering 8–32 (STSLPLPTSVSGSSSVGEMSGRSVS) has biased composition (low complexity). In terms of domain architecture, Bacterial Rho-GAP spans 101 to 219 (SFSDSIKQLA…QQMQKLLSLM (119 aa)).

The protein belongs to the YopE family.

The protein resides in the cell outer membrane. Its function is as follows. Essential virulence determinant; cytotoxic effector, involved in resistance to phagocytosis. The protein is Outer membrane virulence protein YopE (yopE) of Yersinia pestis.